The primary structure comprises 852 residues: Tiger protein I3 (852 aa).

The first 18 residues, 1 to 18 (MKILLFFILFYLFSFSIS), serve as a signal peptide directing secretion. The Extracellular portion of the chain corresponds to 19–830 (YDEVIPLGYE…DVHQYSDARN (812 aa)). Asn-31, Asn-47, Asn-67, Asn-97, Asn-129, Asn-201, Asn-215, Asn-228, Asn-260, Asn-323, Asn-352, Asn-356, Asn-404, Asn-441, Asn-476, Asn-483, Asn-501, Asn-512, Asn-574, Asn-592, Asn-635, Asn-658, Asn-661, Asn-679, Asn-680, Asn-723, Asn-757, Asn-761, Asn-773, Asn-785, and Asn-800 each carry an N-linked (GlcNAc...) asparagine glycan. The 78-residue stretch at 290-367 (IPSIVNSIPK…SSPIAVSIND (78 aa)) folds into the IPT/TIG domain. The chain crosses the membrane as a helical span at residues 831 to 851 (IFQNLLLSILIIIIISLFISN). Ile-852 is a topological domain (cytoplasmic).

Its subcellular location is the membrane. In Dictyostelium discoideum (Social amoeba), this protein is Tiger protein I3 (tgrI3).